The primary structure comprises 350 residues: Protein RecA (350 aa).

66-73 (GPESSGKT) provides a ligand contact to ATP.

It belongs to the RecA family.

It is found in the cytoplasm. Functionally, can catalyze the hydrolysis of ATP in the presence of single-stranded DNA, the ATP-dependent uptake of single-stranded DNA by duplex DNA, and the ATP-dependent hybridization of homologous single-stranded DNAs. It interacts with LexA causing its activation and leading to its autocatalytic cleavage. This is Protein RecA from Dichelobacter nodosus (strain VCS1703A).